The following is a 145-amino-acid chain: Ribonuclease H (145 aa).

The region spanning 1–141 (MQEVTIYSDG…ADALANRGVE (141 aa)) is the RNase H type-1 domain. D9, E47, D69, and D133 together coordinate Mg(2+).

The protein belongs to the RNase H family. Monomer. The cofactor is Mg(2+).

The protein localises to the cytoplasm. It catalyses the reaction Endonucleolytic cleavage to 5'-phosphomonoester.. Endonuclease that specifically degrades the RNA of RNA-DNA hybrids. This chain is Ribonuclease H, found in Cupriavidus necator (strain ATCC 17699 / DSM 428 / KCTC 22496 / NCIMB 10442 / H16 / Stanier 337) (Ralstonia eutropha).